The chain runs to 472 residues: L-aspartate oxidase (472 aa).

Residues 7–10 (SGIA), serine 29, 36–37 (ST), 42–43 (GG), and aspartate 191 contribute to the FAD site. The active-site Proton donor/acceptor is the arginine 257. Residues glutamate 337 and 353 to 354 (SL) contribute to the FAD site.

It belongs to the FAD-dependent oxidoreductase 2 family. NadB subfamily. Monomer. FAD is required as a cofactor.

Its subcellular location is the cytoplasm. It carries out the reaction L-aspartate + O2 = iminosuccinate + H2O2. Its pathway is cofactor biosynthesis; NAD(+) biosynthesis; iminoaspartate from L-aspartate (oxidase route): step 1/1. Its function is as follows. Catalyzes the oxidation of L-aspartate to iminoaspartate, the first step in the de novo biosynthesis of NAD(+). Can also use L-asparagine, but not L-phenylalanine, L-glutamate, glycine, L-proline, L-alanine and D-aspartate. This Sulfurisphaera tokodaii (strain DSM 16993 / JCM 10545 / NBRC 100140 / 7) (Sulfolobus tokodaii) protein is L-aspartate oxidase.